Reading from the N-terminus, the 206-residue chain is tRNA(Phe) 7-((3-amino-3-carboxypropyl)-4-demethylwyosine(37)-N(4))-methyltransferase 2 (206 aa).

It belongs to the TYW3 family.

It catalyses the reaction 4-demethyl-7-[(3S)-3-amino-3-carboxypropyl]wyosine(37) in tRNA(Phe) + S-adenosyl-L-methionine = 7-[(3S)-3-amino-3-carboxypropyl]wyosine(37) in tRNA(Phe) + S-adenosyl-L-homocysteine + H(+). In terms of biological role, S-adenosyl-L-methionine-dependent methyltransferase that acts as a component of the wyosine derivatives biosynthesis pathway. Probably methylates N-4 position of wybutosine-86 to produce wybutosine-72. The polypeptide is tRNA(Phe) 7-((3-amino-3-carboxypropyl)-4-demethylwyosine(37)-N(4))-methyltransferase 2 (Pyrococcus horikoshii (strain ATCC 700860 / DSM 12428 / JCM 9974 / NBRC 100139 / OT-3)).